We begin with the raw amino-acid sequence, 249 residues long: Aspartate/glutamate leucyltransferase (249 aa).

This sequence belongs to the R-transferase family. Bpt subfamily.

Its subcellular location is the cytoplasm. It catalyses the reaction N-terminal L-glutamyl-[protein] + L-leucyl-tRNA(Leu) = N-terminal L-leucyl-L-glutamyl-[protein] + tRNA(Leu) + H(+). The catalysed reaction is N-terminal L-aspartyl-[protein] + L-leucyl-tRNA(Leu) = N-terminal L-leucyl-L-aspartyl-[protein] + tRNA(Leu) + H(+). In terms of biological role, functions in the N-end rule pathway of protein degradation where it conjugates Leu from its aminoacyl-tRNA to the N-termini of proteins containing an N-terminal aspartate or glutamate. In Brucella anthropi (strain ATCC 49188 / DSM 6882 / CCUG 24695 / JCM 21032 / LMG 3331 / NBRC 15819 / NCTC 12168 / Alc 37) (Ochrobactrum anthropi), this protein is Aspartate/glutamate leucyltransferase.